Here is a 281-residue protein sequence, read N- to C-terminus: N-acetylmuramic acid 6-phosphate etherase (281 aa).

The 164-residue stretch at 63 to 226 (IVPRMKQGGR…TTSVMIQLGR (164 aa)) folds into the SIS domain. Glu-91 functions as the Proton donor in the catalytic mechanism. Glu-122 is a catalytic residue.

This sequence belongs to the GCKR-like family. MurNAc-6-P etherase subfamily. Homodimer.

The catalysed reaction is N-acetyl-D-muramate 6-phosphate + H2O = N-acetyl-D-glucosamine 6-phosphate + (R)-lactate. The protein operates within amino-sugar metabolism; N-acetylmuramate degradation. Functionally, specifically catalyzes the cleavage of the D-lactyl ether substituent of MurNAc 6-phosphate, producing GlcNAc 6-phosphate and D-lactate. The protein is N-acetylmuramic acid 6-phosphate etherase of Bacteroides fragilis (strain YCH46).